The primary structure comprises 328 residues: DNA-directed RNA polymerase subunit alpha (328 aa).

The segment at 1–231 (MIYQMQMPTK…DHITFFANFS (231 aa)) is alpha N-terminal domain (alpha-NTD). Residues 247–328 (DEFESMRKLL…MDITRYQLKG (82 aa)) form an alpha C-terminal domain (alpha-CTD) region.

The protein belongs to the RNA polymerase alpha chain family. In terms of assembly, homodimer. The RNAP catalytic core consists of 2 alpha, 1 beta, 1 beta' and 1 omega subunit. When a sigma factor is associated with the core the holoenzyme is formed, which can initiate transcription.

It carries out the reaction RNA(n) + a ribonucleoside 5'-triphosphate = RNA(n+1) + diphosphate. In terms of biological role, DNA-dependent RNA polymerase catalyzes the transcription of DNA into RNA using the four ribonucleoside triphosphates as substrates. This chain is DNA-directed RNA polymerase subunit alpha, found in Chlorobaculum tepidum (strain ATCC 49652 / DSM 12025 / NBRC 103806 / TLS) (Chlorobium tepidum).